We begin with the raw amino-acid sequence, 740 residues long: Phosphoribosylformylglycinamidine synthase subunit PurL (740 aa).

Residue H53 is part of the active site. ATP is bound by residues Y56 and K95. E97 provides a ligand contact to Mg(2+). Substrate-binding positions include 98–101 (SHNH) and R120. Residue H99 is the Proton acceptor of the active site. D121 contributes to the Mg(2+) binding site. Q244 provides a ligand contact to substrate. Mg(2+) is bound at residue D274. 318–320 (ESQ) contributes to the substrate binding site. ATP-binding residues include D501 and G538. N539 serves as a coordination point for Mg(2+). S541 contacts substrate.

The protein belongs to the FGAMS family. Monomer. Part of the FGAM synthase complex composed of 1 PurL, 1 PurQ and 2 PurS subunits.

Its subcellular location is the cytoplasm. It catalyses the reaction N(2)-formyl-N(1)-(5-phospho-beta-D-ribosyl)glycinamide + L-glutamine + ATP + H2O = 2-formamido-N(1)-(5-O-phospho-beta-D-ribosyl)acetamidine + L-glutamate + ADP + phosphate + H(+). Its pathway is purine metabolism; IMP biosynthesis via de novo pathway; 5-amino-1-(5-phospho-D-ribosyl)imidazole from N(2)-formyl-N(1)-(5-phospho-D-ribosyl)glycinamide: step 1/2. In terms of biological role, part of the phosphoribosylformylglycinamidine synthase complex involved in the purines biosynthetic pathway. Catalyzes the ATP-dependent conversion of formylglycinamide ribonucleotide (FGAR) and glutamine to yield formylglycinamidine ribonucleotide (FGAM) and glutamate. The FGAM synthase complex is composed of three subunits. PurQ produces an ammonia molecule by converting glutamine to glutamate. PurL transfers the ammonia molecule to FGAR to form FGAM in an ATP-dependent manner. PurS interacts with PurQ and PurL and is thought to assist in the transfer of the ammonia molecule from PurQ to PurL. This Lactobacillus delbrueckii subsp. bulgaricus (strain ATCC 11842 / DSM 20081 / BCRC 10696 / JCM 1002 / NBRC 13953 / NCIMB 11778 / NCTC 12712 / WDCM 00102 / Lb 14) protein is Phosphoribosylformylglycinamidine synthase subunit PurL.